Reading from the N-terminus, the 230-residue chain is LexA repressor (230 aa).

Positions 28–48 (IREIGEALDIRSTNGVNDHLK) form a DNA-binding region, H-T-H motif. Catalysis depends on for autocatalytic cleavage activity residues serine 148 and lysine 185.

Belongs to the peptidase S24 family. In terms of assembly, homodimer.

It carries out the reaction Hydrolysis of Ala-|-Gly bond in repressor LexA.. In terms of biological role, represses a number of genes involved in the response to DNA damage (SOS response), including recA and lexA. In the presence of single-stranded DNA, RecA interacts with LexA causing an autocatalytic cleavage which disrupts the DNA-binding part of LexA, leading to derepression of the SOS regulon and eventually DNA repair. This Anaeromyxobacter sp. (strain K) protein is LexA repressor.